The sequence spans 158 residues: 2-C-methyl-D-erythritol 2,4-cyclodiphosphate synthase (158 aa).

A divalent metal cation is bound by residues Asp9 and His11. 4-CDP-2-C-methyl-D-erythritol 2-phosphate is bound by residues 9–11 and 35–36; these read DVH and HS. His43 lines the a divalent metal cation pocket. 4-CDP-2-C-methyl-D-erythritol 2-phosphate is bound by residues 57-59, 62-66, 133-136, Phe140, and Arg143; these read DIG, FPDTD, and TTTE.

It belongs to the IspF family. Homotrimer. The cofactor is a divalent metal cation.

The catalysed reaction is 4-CDP-2-C-methyl-D-erythritol 2-phosphate = 2-C-methyl-D-erythritol 2,4-cyclic diphosphate + CMP. Its pathway is isoprenoid biosynthesis; isopentenyl diphosphate biosynthesis via DXP pathway; isopentenyl diphosphate from 1-deoxy-D-xylulose 5-phosphate: step 4/6. In terms of biological role, involved in the biosynthesis of isopentenyl diphosphate (IPP) and dimethylallyl diphosphate (DMAPP), two major building blocks of isoprenoid compounds. Catalyzes the conversion of 4-diphosphocytidyl-2-C-methyl-D-erythritol 2-phosphate (CDP-ME2P) to 2-C-methyl-D-erythritol 2,4-cyclodiphosphate (ME-CPP) with a corresponding release of cytidine 5-monophosphate (CMP). The chain is 2-C-methyl-D-erythritol 2,4-cyclodiphosphate synthase from Geobacillus kaustophilus (strain HTA426).